The following is an 880-amino-acid chain: DNA-directed RNA polymerase subunit beta C-terminal section (880 aa).

The protein belongs to the RNA polymerase beta chain family. In plastids the minimal PEP RNA polymerase catalytic core is composed of four subunits: alpha, beta, beta', and beta''. When a (nuclear-encoded) sigma factor is associated with the core the holoenzyme is formed, which can initiate transcription.

Its subcellular location is the plastid. It is found in the chloroplast. It carries out the reaction RNA(n) + a ribonucleoside 5'-triphosphate = RNA(n+1) + diphosphate. In terms of biological role, DNA-dependent RNA polymerase catalyzes the transcription of DNA into RNA using the four ribonucleoside triphosphates as substrates. This Pleurastrum terricola (Filamentous green alga) protein is DNA-directed RNA polymerase subunit beta C-terminal section (rpoB2).